Reading from the N-terminus, the 456-residue chain is DEAD-box ATP-dependent RNA helicase 10 (456 aa).

The Q motif motif lies at 9 to 37; that stretch reads KTFAELGVREELVKACERLGWKNPSKIQA. The Helicase ATP-binding domain occupies 40 to 223; the sequence is LPFALEGKDV…RACLRNPVKI (184 aa). ATP is bound at residue 53–60; the sequence is AQTGSGKT. The DEAD box motif lies at 171–174; sequence DEAD. Residues 250 to 394 form the Helicase C-terminal domain; it reads YLVYILSEMP…EYPAEEDEVL (145 aa). The tract at residues 407–456 is disordered; it reads SAMNMKESGGRKRRGEDDEESERFLGGNKDRGNKERGGNKDKKSSKKFKR. A compositionally biased stretch (basic and acidic residues) spans 434–448; the sequence is NKDRGNKERGGNKDK.

It belongs to the DEAD box helicase family. DDX47/RRP3 subfamily. As to expression, expressed in all tissues and organs examined including root, cotyledon, first and second leaves, third and fourth leaves, fifth and sixth leaves, shoot apex, flower, flower bud, cauline leaf and rosette leaves.

The protein localises to the nucleus. It localises to the nucleolus. It catalyses the reaction ATP + H2O = ADP + phosphate + H(+). In terms of biological role, involved in leaf polarity establishment by functioning cooperatively with AS2 to repress abaxial genes ARF3, ARF4, KAN1, KAN2, YAB1 and YAB5, and the knox homeobox genes KNAT1, KNAT2, KNAT6, and STM to promote adaxial development in leaf primordia at shoot apical meristems at high temperatures. Involved in the processing of pre-rRNA intermediates at high temperatures. This is DEAD-box ATP-dependent RNA helicase 10 (RH10) from Arabidopsis thaliana (Mouse-ear cress).